The primary structure comprises 302 residues: Putative S-adenosyl-L-methionine-dependent methyltransferase MAB_4586c (302 aa).

Residues aspartate 122 and 151-152 (DL) contribute to the S-adenosyl-L-methionine site.

Belongs to the UPF0677 family.

Functionally, exhibits S-adenosyl-L-methionine-dependent methyltransferase activity. The polypeptide is Putative S-adenosyl-L-methionine-dependent methyltransferase MAB_4586c (Mycobacteroides abscessus (strain ATCC 19977 / DSM 44196 / CCUG 20993 / CIP 104536 / JCM 13569 / NCTC 13031 / TMC 1543 / L948) (Mycobacterium abscessus)).